The primary structure comprises 577 residues: Arginine--tRNA ligase (577 aa).

A 'HIGH' region motif is present at residues 122–132 (PNVAKEMHVGH).

It belongs to the class-I aminoacyl-tRNA synthetase family. As to quaternary structure, monomer.

The protein localises to the cytoplasm. It carries out the reaction tRNA(Arg) + L-arginine + ATP = L-arginyl-tRNA(Arg) + AMP + diphosphate. The protein is Arginine--tRNA ligase of Aliivibrio fischeri (strain MJ11) (Vibrio fischeri).